The following is a 510-amino-acid chain: Maturase K (510 aa).

The protein belongs to the intron maturase 2 family. MatK subfamily.

The protein resides in the plastid. It localises to the chloroplast. Functionally, usually encoded in the trnK tRNA gene intron. Probably assists in splicing its own and other chloroplast group II introns. The protein is Maturase K of Populus trichocarpa (Western balsam poplar).